Reading from the N-terminus, the 727-residue chain is Phenylalanine ammonia-lyase str11 (727 aa).

Tyr-105 (proton donor/acceptor) is an active-site residue. A cross-link (5-imidazolinone (Ala-Gly)) is located at residues 210-212 (ASG). Ser-211 is subject to 2,3-didehydroalanine (Ser). 7 residues coordinate (E)-cinnamate: Asn-271, Gln-361, Arg-367, Asn-397, Lys-468, Glu-496, and Asn-499.

It belongs to the PAL/histidase family. In terms of processing, contains an active site 4-methylidene-imidazol-5-one (MIO), which is formed autocatalytically by cyclization and dehydration of residues Ala-Ser-Gly.

The catalysed reaction is L-phenylalanine = (E)-cinnamate + NH4(+). It functions in the pathway mycotoxin biosynthesis. In terms of biological role, phenylalanine ammonia-lyase; part of the gene cluster that mediates the biosynthesis of strobilurin A, an antifungal polyketide that contains a key beta-methoxyacrylate toxophore that targets the complex III of the mitochondrial electron transport chain. Strobilurin biosynthesis begins with construction of benzoyl CoA by step-wise elimination of ammonia from phenylalanine by the phenylalanine ammonia-lyase str11, oxygenation by str8 and retro-Claisen reaction to form benzoic acid, which is activated to its CoA thiolester benzoyl CoA by the dedicated CoA ligase str10. Benzoyl CoA forms the starter unit for the highly reducing polyketide synthase stpks1 that produces the polyketide prestrobilutin A. The FAD-dependent oxygenase str9 then catalyzes the key oxidative rearrangement responsible for the creation of the beta-methoxyacrylate toxophore. Str9 performs epoxidation of the 2,3 olefin of prestrobilutin A, followed by Meinwald rearrangement to furnish the aldehyde intermediate. Rapid enolization of the aldehyde intermediate would give the beta-methoxyacrylate skeleton and methylations catalyzed by str2 and str3 complete the synthesis and lead to the production of strobilurin A. The short-chain dehydrogenase stl2 and the dehydrogenase str4 play a role in the shunt pathway leading to the production of bolineol. The cluster encodes no obvious halogenase gene that could be involved in production of strobilurin B, nor any obvious dimethylallyl-transferase that could be involved in the production of strobilurin G. It is possible that unknown proteins encoded in, or near, the cluster (such as str1 or stl1) may form new classes of halogenases or dimethylally-transferases, or that the responsible genes are located elsewhere on the genome. Similarly, proteins encoded by str5/str6 hydrolases appear to have no chemical role in the biosynthesis of strobilurin A. Finally, no obvious self-resistance gene is found within the cluster. This is Phenylalanine ammonia-lyase str11 from Strobilurus tenacellus.